Reading from the N-terminus, the 245-residue chain is Tetraspanin-6 (245 aa).

At Met1–Ser19 the chain is on the cytoplasmic side. A helical membrane pass occupies residues Val20–Ile40. Residues Trp41 to Asn59 are Extracellular-facing. A helical membrane pass occupies residues Val60–Phe80. Residues Ala81–Tyr93 lie on the Cytoplasmic side of the membrane. A helical transmembrane segment spans residues Ala94–Phe114. Residues Arg115 to Glu208 are Extracellular-facing. N-linked (GlcNAc...) asparagine glycosylation is present at Asn134. A helical transmembrane segment spans residues Met209–Leu229. At Ala230–Val245 the chain is on the cytoplasmic side.

Belongs to the tetraspanin (TM4SF) family.

Its subcellular location is the membrane. This is Tetraspanin-6 (Tspan6) from Mus musculus (Mouse).